Reading from the N-terminus, the 329-residue chain is Tryptophan--tRNA ligase (329 aa).

Residues 9–11 and 17–18 each bind ATP; these read QPS and GN. The 'HIGH' region signature appears at 10–18; it reads PSGIPTIGN. An L-tryptophan-binding site is contributed by D133. Residues 145–147, V184, and 193–197 contribute to the ATP site; these read GDD and KMSKS. Residues 193-197 carry the 'KMSKS' region motif; that stretch reads KMSKS.

Belongs to the class-I aminoacyl-tRNA synthetase family. In terms of assembly, homodimer.

Its subcellular location is the cytoplasm. It carries out the reaction tRNA(Trp) + L-tryptophan + ATP = L-tryptophyl-tRNA(Trp) + AMP + diphosphate + H(+). In terms of biological role, catalyzes the attachment of tryptophan to tRNA(Trp). The polypeptide is Tryptophan--tRNA ligase (Staphylococcus aureus (strain MSSA476)).